Consider the following 328-residue polypeptide: Tetraacyldisaccharide 4'-kinase (328 aa).

55-62 (TAGGNGKT) is a binding site for ATP.

This sequence belongs to the LpxK family.

The catalysed reaction is a lipid A disaccharide + ATP = a lipid IVA + ADP + H(+). It functions in the pathway glycolipid biosynthesis; lipid IV(A) biosynthesis; lipid IV(A) from (3R)-3-hydroxytetradecanoyl-[acyl-carrier-protein] and UDP-N-acetyl-alpha-D-glucosamine: step 6/6. Its function is as follows. Transfers the gamma-phosphate of ATP to the 4'-position of a tetraacyldisaccharide 1-phosphate intermediate (termed DS-1-P) to form tetraacyldisaccharide 1,4'-bis-phosphate (lipid IVA). This Shigella boydii serotype 18 (strain CDC 3083-94 / BS512) protein is Tetraacyldisaccharide 4'-kinase.